The sequence spans 125 residues: Small ribosomal subunit protein uS12 (125 aa).

A 3-methylthioaspartic acid modification is found at Asp89.

This sequence belongs to the universal ribosomal protein uS12 family. As to quaternary structure, part of the 30S ribosomal subunit. Contacts proteins S8 and S17. May interact with IF1 in the 30S initiation complex.

In terms of biological role, with S4 and S5 plays an important role in translational accuracy. Interacts with and stabilizes bases of the 16S rRNA that are involved in tRNA selection in the A site and with the mRNA backbone. Located at the interface of the 30S and 50S subunits, it traverses the body of the 30S subunit contacting proteins on the other side and probably holding the rRNA structure together. The combined cluster of proteins S8, S12 and S17 appears to hold together the shoulder and platform of the 30S subunit. The protein is Small ribosomal subunit protein uS12 of Wigglesworthia glossinidia brevipalpis.